The following is an 86-amino-acid chain: MTDRYTIHSQLEHLQSKYIGTGHADTTKWEWLVNQHRDSYCSYMGHFDLLNYFAIAENESKARVRFNLMEKMLQPCGPPADKPEEN.

At Thr-2 the chain carries N-acetylthreonine. Phosphoserine is present on Ser-9. Residues 15–76 (QSKYIGTGHA…NLMEKMLQPC (62 aa)) form an interaction with SF3B1 and SF3B3 region. Lys-17 bears the N6-acetyllysine mark.

It belongs to the SF3B5 family. Component of the 17S U2 SnRNP complex, a ribonucleoprotein complex that contains small nuclear RNA (snRNA) U2 and a number of specific proteins. Part of the SF3B subcomplex of the 17S U2 SnRNP complex. SF3B associates with the splicing subcomplex SF3A and a 12S RNA unit to form the U2 small nuclear ribonucleoproteins complex (U2 snRNP). Within the SF3B subcomplex, interacts directly with SF3B1 (via HEAT domain) and SF3B3. Component of the minor spliceosome, which splices U12-type introns.

It is found in the nucleus. Component of the 17S U2 SnRNP complex of the spliceosome, a large ribonucleoprotein complex that removes introns from transcribed pre-mRNAs. The 17S U2 SnRNP complex (1) directly participates in early spliceosome assembly and (2) mediates recognition of the intron branch site during pre-mRNA splicing by promoting the selection of the pre-mRNA branch-site adenosine, the nucleophile for the first step of splicing. Within the 17S U2 SnRNP complex, SF3B4 is part of the SF3B subcomplex, which is required for 'A' complex assembly formed by the stable binding of U2 snRNP to the branchpoint sequence in pre-mRNA. Sequence independent binding of SF3A and SF3B subcomplexes upstream of the branch site is essential, it may anchor U2 snRNP to the pre-mRNA. Also acts as a component of the minor spliceosome, which is involved in the splicing of U12-type introns in pre-mRNAs. This is Splicing factor 3B subunit 5 (SF3B5) from Bos taurus (Bovine).